The chain runs to 370 residues: Anhydro-N-acetylmuramic acid kinase (370 aa).

13–20 (GTSMDGVD) is an ATP binding site.

This sequence belongs to the anhydro-N-acetylmuramic acid kinase family.

The enzyme catalyses 1,6-anhydro-N-acetyl-beta-muramate + ATP + H2O = N-acetyl-D-muramate 6-phosphate + ADP + H(+). It participates in amino-sugar metabolism; 1,6-anhydro-N-acetylmuramate degradation. Its pathway is cell wall biogenesis; peptidoglycan recycling. Catalyzes the specific phosphorylation of 1,6-anhydro-N-acetylmuramic acid (anhMurNAc) with the simultaneous cleavage of the 1,6-anhydro ring, generating MurNAc-6-P. Is required for the utilization of anhMurNAc either imported from the medium or derived from its own cell wall murein, and thus plays a role in cell wall recycling. This is Anhydro-N-acetylmuramic acid kinase from Vibrio vulnificus (strain CMCP6).